The sequence spans 197 residues: Dephospho-CoA kinase (197 aa).

The DPCK domain occupies I2–E197. G10 to A15 is a binding site for ATP.

The protein belongs to the CoaE family.

It localises to the cytoplasm. It carries out the reaction 3'-dephospho-CoA + ATP = ADP + CoA + H(+). Its pathway is cofactor biosynthesis; coenzyme A biosynthesis; CoA from (R)-pantothenate: step 5/5. Its function is as follows. Catalyzes the phosphorylation of the 3'-hydroxyl group of dephosphocoenzyme A to form coenzyme A. This Gamma-proteobacterium EBAC31A08 protein is Dephospho-CoA kinase.